The sequence spans 80 residues: Probable antimicrobial peptide clone Con10 (80 aa).

A signal peptide spans 1–24; it reads MQYKTKTFLVIFLAYLVVTNEAEA. Residues 56 to 80 constitute a propeptide that is removed on maturation; the sequence is EIEDFFDPYQRELDLELERLLSQLQ.

It belongs to the non-disulfide-bridged peptide (NDBP) superfamily. Medium-length antimicrobial peptide (group 3) family. As to expression, expressed by the venom gland.

The protein resides in the secreted. It localises to the target cell membrane. Its function is as follows. Antimicrobial peptide. Has antifungal activity against all strains tested (MIC=12.5-200 uM). May act by disrupting the integrity of the bacterial cell membrane. The sequence is that of Probable antimicrobial peptide clone Con10 from Opisthacanthus cayaporum (South American scorpion).